Reading from the N-terminus, the 595-residue chain is MGDKPTLVTLLTVAVSSPPPSSPLPLVSFTELLLPPPSVAAAAVAATATSEVGEKTAEQEVAAAGPETRNERRENREDEGGETRTTGTTAVKRSHDGIPRQLAERLRLCRHMDPEQDYRLPAQDVVTSWIEALRDADRDNYGRCVRHAKIHRSASHLTAYESYLVSITEQYNTASNVTEKASYVQGCIFLSFPVIYNNTQGCGYKYDWSNVVTPKAAYAELFFLLCSTSESSVVLQPLITKGGLCSSMAVYDEETMRQSQAVQIGFLHTQLVMVPFVPHACPHYAVPFTTPGKPGCGGAPSGVAGLEETAPFGRVSVTRHGATLLCRVDHLTWISKRVTTYGHKKITRYLAQFRGTMDDDEAALPGEDEAWIASKNVQYEFMGLIFTVNVDSLCVDAEQRQLLGTVATSFCHRVSDKITARNMPRAFSFYLLTSAQRGYDLRFSRNPSLFFSGDALNCPLLNEPNVFSLTVHAPYDIHFGVQPRQTVELDLRYVQITDRCFLVANLPHEDAFYTGLSVWRGGEPLKVTLWTRTRSIVIPQGTPIATLYQITEGDGNVYSYNHHTVFRQMHAAGATTFFLGDMQLPADNFLTSPHP.

The signal sequence occupies residues 1-40; it reads MGDKPTLVTLLTVAVSSPPPSSPLPLVSFTELLLPPPSVA. The interval 47 to 94 is disordered; the sequence is TATSEVGEKTAEQEVAAAGPETRNERRENREDEGGETRTTGTTAVKRS. A compositionally biased stretch (basic and acidic residues) spans 68–82; it reads TRNERRENREDEGGE.

The protein belongs to the herpesviridae U10 family. In terms of assembly, interacts with host CGAS.

The protein localises to the host cytoplasm. The protein resides in the host nucleus. Plays a role in the inhibition of host innate immune system by targeting host CGAS and promoting dissociation of DNA from CGAS, thereby inhibiting the enzymatic activity of CGAS. The polypeptide is Protein UL31 (UL31) (Human cytomegalovirus (strain Merlin) (HHV-5)).